The sequence spans 415 residues: Histidine--tRNA ligase (415 aa).

Belongs to the class-II aminoacyl-tRNA synthetase family. In terms of assembly, homodimer.

It is found in the cytoplasm. It carries out the reaction tRNA(His) + L-histidine + ATP = L-histidyl-tRNA(His) + AMP + diphosphate + H(+). In Clostridium botulinum (strain 657 / Type Ba4), this protein is Histidine--tRNA ligase.